A 456-amino-acid polypeptide reads, in one-letter code: L-2-hydroxyglutarate dehydrogenase, mitochondrial (456 aa).

The transit peptide at 1-20 (MLKTSFLLSKRNAVSLSRVL) directs the protein to the mitochondrion.

This sequence belongs to the L2HGDH family. Requires FAD as cofactor.

The protein resides in the mitochondrion. It carries out the reaction (S)-2-hydroxyglutarate + A = 2-oxoglutarate + AH2. In Nematostella vectensis (Starlet sea anemone), this protein is L-2-hydroxyglutarate dehydrogenase, mitochondrial.